The chain runs to 313 residues: Methionyl-tRNA formyltransferase (313 aa).

Position 110-113 (110-113 (SLLP)) interacts with (6S)-5,6,7,8-tetrahydrofolate.

It belongs to the Fmt family.

It carries out the reaction L-methionyl-tRNA(fMet) + (6R)-10-formyltetrahydrofolate = N-formyl-L-methionyl-tRNA(fMet) + (6S)-5,6,7,8-tetrahydrofolate + H(+). In terms of biological role, attaches a formyl group to the free amino group of methionyl-tRNA(fMet). The formyl group appears to play a dual role in the initiator identity of N-formylmethionyl-tRNA by promoting its recognition by IF2 and preventing the misappropriation of this tRNA by the elongation apparatus. The protein is Methionyl-tRNA formyltransferase of Lysinibacillus sphaericus (strain C3-41).